Reading from the N-terminus, the 297-residue chain is Phosphoribosylaminoimidazole-succinocarboxamide synthase (297 aa).

Belongs to the SAICAR synthetase family.

It carries out the reaction 5-amino-1-(5-phospho-D-ribosyl)imidazole-4-carboxylate + L-aspartate + ATP = (2S)-2-[5-amino-1-(5-phospho-beta-D-ribosyl)imidazole-4-carboxamido]succinate + ADP + phosphate + 2 H(+). It participates in purine metabolism; IMP biosynthesis via de novo pathway; 5-amino-1-(5-phospho-D-ribosyl)imidazole-4-carboxamide from 5-amino-1-(5-phospho-D-ribosyl)imidazole-4-carboxylate: step 1/2. The chain is Phosphoribosylaminoimidazole-succinocarboxamide synthase from Mycobacteroides abscessus (strain ATCC 19977 / DSM 44196 / CCUG 20993 / CIP 104536 / JCM 13569 / NCTC 13031 / TMC 1543 / L948) (Mycobacterium abscessus).